Here is a 319-residue protein sequence, read N- to C-terminus: FAD-dependent oxidoreductase FVFD30 (319 aa).

R6, D18, and K25 together coordinate FAD. NAD(+) is bound by residues K129 and G188. Positions 129 and 188 each coordinate NADP(+). 2 residues coordinate FAD: D228 and Y265. D228 is a binding site for 6-hydroxy-FAD. Residue Y265 participates in NAD(+) binding. Y265 is a binding site for NADP(+). Residues 281–301 (GVGYFGVWWGIVIGGWLASLL) traverse the membrane as a helical segment.

The protein belongs to the FAD-dependent oxidoreductase family.

Its subcellular location is the membrane. Probable FAD-dependent oxidoreductase that plays a role in the regulation of fruiting body development. This chain is FAD-dependent oxidoreductase FVFD30, found in Flammulina velutipes (Agaricus velutipes).